A 263-amino-acid chain; its full sequence is UPF0739 protein C1orf74 homolog (263 aa).

Belongs to the UPF0739 family.

The polypeptide is UPF0739 protein C1orf74 homolog (Mus musculus (Mouse)).